The following is a 271-amino-acid chain: Phosphatidylglycerol--prolipoprotein diacylglyceryl transferase (271 aa).

7 consecutive transmembrane segments (helical) span residues 18 to 38 (IFGLKVHWYGIMYVLALLVAL), 60 to 80 (YFIWVEIGVILGARIGYILIY), 103 to 123 (FVGIRGMSYHGAVVGFLIATY), 137 to 157 (LDLVAISVPCGYIFGRIGNFL), 181 to 201 (PSQLYEAFLEGFIVFIILLLI), 209 to 229 (GELIAYYTILYALARFVCEFF), and 236 to 256 (IGFVAFGMSMGQILSLLMFLL). R152 provides a ligand contact to a 1,2-diacyl-sn-glycero-3-phospho-(1'-sn-glycerol).

It belongs to the Lgt family.

It is found in the cell inner membrane. It carries out the reaction L-cysteinyl-[prolipoprotein] + a 1,2-diacyl-sn-glycero-3-phospho-(1'-sn-glycerol) = an S-1,2-diacyl-sn-glyceryl-L-cysteinyl-[prolipoprotein] + sn-glycerol 1-phosphate + H(+). It participates in protein modification; lipoprotein biosynthesis (diacylglyceryl transfer). In terms of biological role, catalyzes the transfer of the diacylglyceryl group from phosphatidylglycerol to the sulfhydryl group of the N-terminal cysteine of a prolipoprotein, the first step in the formation of mature lipoproteins. The polypeptide is Phosphatidylglycerol--prolipoprotein diacylglyceryl transferase (Campylobacter lari (strain RM2100 / D67 / ATCC BAA-1060)).